The primary structure comprises 227 residues: Cell wall mannoprotein CIS3 (227 aa).

The signal sequence occupies residues 1 to 21 (MQFKNVALAASVAALSATASA). A propeptide spanning residues 22-64 (EGYTPGEPWSTLTPTGSISCGAAEYTTTFGIAVQAITSSKAKR) is cleaved from the precursor. Residues 65–78 (DVISQIGDGQVQAT) form a PIR1/2/3 repeat. An O-linked (Man) serine glycan is attached at Ser68. Residue Thr78 is glycosylated (O-linked (Man) threonine). Positions 83–124 (AQATDSQAQATTTATPTSSEKISSSASKTSTNATSSSCATPS) are enriched in low complexity. A disordered region spans residues 83-127 (AQATDSQAQATTTATPTSSEKISSSASKTSTNATSSSCATPSLKD). O-linked (Man) serine glycosylation is found at Ser105, Ser106, Ser107, and Ser109. O-linked (Man) threonine glycosylation is present at Thr111. The O-linked (Man) serine glycan is linked to Ser112. Residue Thr113 is glycosylated (O-linked (Man) threonine). An N-linked (GlcNAc...) asparagine glycan is attached at Asn114. A glycan (O-linked (Man) threonine) is linked at Thr116. O-linked (Man) serine glycans are attached at residues Ser117 and Ser118.

It belongs to the PIR protein family. In terms of processing, covalently linked to beta-1,3-glucan of the inner cell wall layer via an alkali-sensitive ester linkage between the gamma-carboxyl group of glutamic acid, arising from Gln-74 within the PIR1/2/3 repeat, and hydroxyl groups of glucoses of beta-1,3-glucan chains. Post-translationally, extensively O-mannosylated. Also N-glycosylated.

The protein resides in the secreted. It localises to the cell wall. Component of the outer cell wall layer. Required for stability of the cell wall and for optimal growth. Required for resistance against several antifungal and cell wall-perturbing agents. This Saccharomyces cerevisiae (strain ATCC 204508 / S288c) (Baker's yeast) protein is Cell wall mannoprotein CIS3 (CIS3).